Consider the following 204-residue polypeptide: Ribonuclease HII (204 aa).

The 197-residue stretch at 1–197 folds into the RNase H type-2 domain; sequence MTLGIDEAGR…KNRILNPKLL (197 aa). Residues aspartate 6, glutamate 7, and aspartate 103 each coordinate a divalent metal cation.

This sequence belongs to the RNase HII family. Requires Mn(2+) as cofactor. The cofactor is Mg(2+).

It is found in the cytoplasm. It catalyses the reaction Endonucleolytic cleavage to 5'-phosphomonoester.. Functionally, endonuclease that specifically degrades the RNA of RNA-DNA hybrids. This Helicobacter pylori (strain HPAG1) protein is Ribonuclease HII.